A 588-amino-acid chain; its full sequence is Sperm-associated microtubule inner protein 4 (588 aa).

Threonine 219 carries the phosphothreonine modification. Phosphoserine occurs at positions 406, 421, and 427. Tyrosine 441 bears the Phosphotyrosine mark. Phosphoserine occurs at positions 457, 484, and 516.

As to expression, predominantly expressed in the testes.

Its subcellular location is the cytoplasm. The protein resides in the cytoskeleton. It localises to the microtubule organizing center. It is found in the centrosome. The protein localises to the flagellum axoneme. Microtubule inner protein (MIP) part of the dynein-decorated doublet microtubules (DMTs) in flagellum axoneme. May serve to reinforce and thus stabilize the microtubule structure in the sperm flagella. The sequence is that of Sperm-associated microtubule inner protein 4 (Spmip4) from Mus musculus (Mouse).